We begin with the raw amino-acid sequence, 72 residues long: Translation initiation factor IF-1 (72 aa).

The S1-like domain occupies 1-72; that stretch reads MAKDDVIEID…DKGRITYRYK (72 aa).

Belongs to the IF-1 family. In terms of assembly, component of the 30S ribosomal translation pre-initiation complex which assembles on the 30S ribosome in the order IF-2 and IF-3, IF-1 and N-formylmethionyl-tRNA(fMet); mRNA recruitment can occur at any time during PIC assembly.

The protein resides in the cytoplasm. In terms of biological role, one of the essential components for the initiation of protein synthesis. Stabilizes the binding of IF-2 and IF-3 on the 30S subunit to which N-formylmethionyl-tRNA(fMet) subsequently binds. Helps modulate mRNA selection, yielding the 30S pre-initiation complex (PIC). Upon addition of the 50S ribosomal subunit IF-1, IF-2 and IF-3 are released leaving the mature 70S translation initiation complex. The sequence is that of Translation initiation factor IF-1 from Campylobacter fetus subsp. fetus (strain 82-40).